The primary structure comprises 446 residues: D(1A) dopamine receptor (446 aa).

Residues 1-22 (MAPNTSTMDETGLPVERDFSFR) are Extracellular-facing. Residue Asn-4 is glycosylated (N-linked (GlcNAc...) asparagine). Residues 23–48 (ILTACFLSLLILSTLLGNTLVCAAVI) traverse the membrane as a helical segment. Residues 49 to 59 (RFRHLRSKVTN) are Cytoplasmic-facing. The helical transmembrane segment at 60-86 (FFVISLAVSDLLVAVLVMPWKAVAEIA) threads the bilayer. Over 87 to 95 (GFWPFGSFC) the chain is Extracellular. A disulfide bond links Cys-95 and Cys-186. A helical membrane pass occupies residues 96–118 (NIWVAFDIMCSTASILNLCVISV). Over 119–137 (DRYWAISSPFQYERKMTPK) the chain is Cytoplasmic. Residues 138–162 (AAFILISVAWTLSVLISFIPVQLSW) traverse the membrane as a helical segment. The Extracellular segment spans residues 163-192 (HKAKPTWPLDGNFTSLEDAEDDNCDTRLSR). Residues 193 to 218 (TYAISSSLISFYIPVAIMIVTYTSIY) traverse the membrane as a helical segment. Over 219 to 272 (RIAQKQIRRISALERAAVHAKNCQTTTGNGNPVECSQSESSFKMSFKRETKVLK) the chain is Cytoplasmic. The helical transmembrane segment at 273–299 (TLSVIMGVFVCCWLPFFISNCMVPFCG) threads the bilayer. The Extracellular portion of the chain corresponds to 300 to 312 (SEETQPFCIDSIT). The chain crosses the membrane as a helical span at residues 313–337 (FDVFVWFGWANSSLNPIIYAFNADF). The Cytoplasmic portion of the chain corresponds to 338–446 (QKAFSTLLGC…PVTHSGQHST (109 aa)). 2 S-palmitoyl cysteine lipidation sites follow: Cys-347 and Cys-351. Ser-441 carries the phosphoserine modification.

It belongs to the G-protein coupled receptor 1 family. In terms of assembly, interacts with DNAJC14 via its C-terminus. Interacts with DRD2. Interacts with DORIP1.

It localises to the cell membrane. The protein resides in the endoplasmic reticulum membrane. The protein localises to the cell projection. It is found in the cilium membrane. Its subcellular location is the dendrite. It localises to the dendritic spine. Functionally, dopamine receptor whose activity is mediated by G proteins which activate adenylyl cyclase. This is D(1A) dopamine receptor (Drd1) from Mus musculus (Mouse).